We begin with the raw amino-acid sequence, 132 residues long: DNA-directed RNA polymerase subunit omega (132 aa).

It belongs to the RNA polymerase subunit omega family. The RNAP catalytic core consists of 2 alpha, 1 beta, 1 beta' and 1 omega subunit. When a sigma factor is associated with the core the holoenzyme is formed, which can initiate transcription.

The enzyme catalyses RNA(n) + a ribonucleoside 5'-triphosphate = RNA(n+1) + diphosphate. Promotes RNA polymerase assembly. Latches the N- and C-terminal regions of the beta' subunit thereby facilitating its interaction with the beta and alpha subunits. The sequence is that of DNA-directed RNA polymerase subunit omega from Ehrlichia ruminantium (strain Welgevonden).